Here is a 274-residue protein sequence, read N- to C-terminus: Elongation factor Ts (274 aa).

The tract at residues Thr76 to Val79 is involved in Mg(2+) ion dislocation from EF-Tu.

The protein belongs to the EF-Ts family.

It localises to the cytoplasm. Functionally, associates with the EF-Tu.GDP complex and induces the exchange of GDP to GTP. It remains bound to the aminoacyl-tRNA.EF-Tu.GTP complex up to the GTP hydrolysis stage on the ribosome. This is Elongation factor Ts from Mycobacterium sp. (strain JLS).